A 172-amino-acid chain; its full sequence is Ribosome maturation factor RimM (172 aa).

A PRC barrel domain is found at E96–L168.

It belongs to the RimM family. Binds ribosomal protein uS19.

It is found in the cytoplasm. An accessory protein needed during the final step in the assembly of 30S ribosomal subunit, possibly for assembly of the head region. Essential for efficient processing of 16S rRNA. May be needed both before and after RbfA during the maturation of 16S rRNA. It has affinity for free ribosomal 30S subunits but not for 70S ribosomes. In Streptococcus pyogenes serotype M1, this protein is Ribosome maturation factor RimM.